The following is a 315-amino-acid chain: Kiwa protein KwaB (315 aa).

Functionally, component of antiviral defense system Kiwa, composed of KwaA and KwaB. Expression of Kiwa in E.coli (strain MG1655) confers resistance to phages lambda and SECphi18. The polypeptide is Kiwa protein KwaB (Escherichia coli O55:H7 (strain RM12579 / EPEC)).